Consider the following 340-residue polypeptide: Tryptophan--tRNA ligase (340 aa).

ATP-binding positions include 11–13 and 19–20; these read RPT and GH. The short motif at 12 to 20 is the 'HIGH' region element; the sequence is PTGKLHLGH. Asp-140 lines the L-tryptophan pocket. ATP-binding positions include 152-154, Leu-194, and 202-206; these read GND and KMSKS. Residues 202–206 carry the 'KMSKS' region motif; it reads KMSKS.

Belongs to the class-I aminoacyl-tRNA synthetase family. Homodimer.

The protein resides in the cytoplasm. It carries out the reaction tRNA(Trp) + L-tryptophan + ATP = L-tryptophyl-tRNA(Trp) + AMP + diphosphate + H(+). Catalyzes the attachment of tryptophan to tRNA(Trp). The chain is Tryptophan--tRNA ligase from Streptococcus pyogenes serotype M1.